Consider the following 282-residue polypeptide: Heme oxygenase 1, chloroplastic (282 aa).

Residues 1-56 (MASATVVSQIQSLYIIKPRLSPPPPPHRQFRSIYFPTTRLLQQHRFRQMKSVVIVP) constitute a chloroplast transit peptide. His86 provides a ligand contact to heme b.

The protein belongs to the heme oxygenase family. As to expression, highly expressed in root nodules and, to a lower extent, in leaves, shoots, roots, flowers and pods (at protein level).

It localises to the plastid. The protein resides in the chloroplast. The enzyme catalyses heme b + 3 reduced [NADPH--hemoprotein reductase] + 3 O2 = biliverdin IXalpha + CO + Fe(2+) + 3 oxidized [NADPH--hemoprotein reductase] + 3 H2O + H(+). Key enzyme in the synthesis of the chromophore of the phytochrome family of plant photoreceptors. Catalyzes the opening of the heme ring to form the open-chain tetrapyrrole biliverdin IX with the release of iron and carbon monoxide (CO). Produces specifically the biliverdin IX-alpha isomer. Can form complex with heme, is ferredoxin-dependent and its activity is increased in the presence of ascorbate. May affect the plastid-to-nucleus signaling pathway by perturbing tetrapyrrole synthesis. The plastid-to-nucleus signal plays an important role in the coordinated expression of both nuclear- and chloroplast-localized genes that encode photosynthesis-related proteins. Required for efficient symbiotic nitrogen fixation (SNF) in root nodules. Responsible for heme catabolism in uninfected nodule interstitial cells (UC), preventing superoxide production under stressful conditions (e.g. nitrate exposure and darkness) and catalyzing biliverdin (BV) production in senescing green nodules. This is Heme oxygenase 1, chloroplastic from Lotus japonicus (Lotus corniculatus var. japonicus).